The following is a 448-amino-acid chain: FAD-dependent monooxygenase srdH (448 aa).

FAD contacts are provided by glutamate 32 and arginine 107. The active site involves glutamine 227. Aspartate 313 is an FAD binding site.

The protein belongs to the paxM FAD-dependent monooxygenase family. Requires FAD as cofactor.

Its function is as follows. Highly reducing polyketide synthase; part of the gene cluster that mediates the biosynthesis of sordarial, a salicylic aldehyde structurally related to the phytotoxin pyriculol. The most interesting aspect of this pathway is formation of an aromatic product from the highly reducing polyketide synthase srdA. SrdA synthesizes a reduced polyketide chain from one molecule of acetyl-CoA and five molecules of malonyl-CoA. The polyketide chain is then reductively released as an aldehyde. The oxidoreductases srdC, srdD and srdE then oxidize one of the hydroxy groups to facilitate the intramolecular aldol condensation, followed by dehydration to yield a salicylic aldehyde. This aldehyde can undergo facile reduction by endogenous reductases to yield the alcohol 1-hydroxy-2-hydroxymethyl-3-pent-1,3-dienylbenzene. The flavin-dependent srdI counteract against the propensity of the aldehydes to be reduced under physiological conditions and is responsible for reoxidizing 1-hydroxy-2-hydroxymethyl-3-pent-1,3-dienylbenzene back to the salicylic aldehyde. This salicylic aldehyde is then selectively epoxidized by the cupin-domain-containing oxidoreductase srdB to yield the epoxide, which can be hydrolyzed stereoselectively by the hydrolase srdG to give the final product sordarial. In Neurospora crassa (strain ATCC 24698 / 74-OR23-1A / CBS 708.71 / DSM 1257 / FGSC 987), this protein is FAD-dependent monooxygenase srdH.